The primary structure comprises 442 residues: Protein phosphatase 2C 3 (442 aa).

Positions 30 to 100 (RFRMSPSEMN…VSISDGNSSV (71 aa)) are disordered. Positions 79 to 90 (PEEESVSLEDSD) are enriched in acidic residues. The PPM-type phosphatase domain maps to 120 to 433 (RYGVASVCGR…DNVSVVVIDL (314 aa)). Mn(2+) contacts are provided by D162, G163, and D339. The disordered stretch occupies residues 363 to 401 (GRGRRRGETQTPGRRSEEEGKEEEEKVVGSRKNGKRGEI). The segment covering 376-390 (RRSEEEGKEEEEKVV) has biased composition (basic and acidic residues). D424 serves as a coordination point for Mn(2+).

It belongs to the PP2C family. As to quaternary structure, part of a K(+)-channel calcium-sensing kinase/phosphatase complex composed by a calcium sensor CBL (CBL1, CBL2, CBL3 or CBL9), a kinase CIPK (CIPK6, CIPK16 or CIPK23), a phosphatase PP2C (AIP1) and a K(+)-channel (AKT1). Interacts with AKT1 and CIPK23. Interacts with PYL8/RCAR3 in an abscisic acid-independent. Interacts with PYR1/RCAR11 in an abscisic acid-dependent manner. It depends on Mg(2+) as a cofactor. Mn(2+) is required as a cofactor. In terms of tissue distribution, expressed in shoot meristem, vascular tissues of cotyledons, and in primary roots surrounding the root meristem. Highly expressed in seeds.

It localises to the cell membrane. The protein localises to the cytoplasm. It is found in the nucleus. It catalyses the reaction O-phospho-L-seryl-[protein] + H2O = L-seryl-[protein] + phosphate. The catalysed reaction is O-phospho-L-threonyl-[protein] + H2O = L-threonyl-[protein] + phosphate. In terms of biological role, involved in the negative regulation of the K(+) potassium channel AKT1 by its dephosphorylation, antagonistically to CIPK proteins (e.g. CIPK23). Functions as a positive regulator of abscisic acid-mediated cell signaling during seedling growth. Involved in the regulation of seed dormancy. Acts as a negative regulator of seed dormancy by inhibiting abscisic signaling and subsequently activating gibberellic acid signaling. The chain is Protein phosphatase 2C 3 from Arabidopsis thaliana (Mouse-ear cress).